The primary structure comprises 161 residues: MLSPKRTKFRKQQRGRMRGVATRGNKIAFGQFALQAQDCGWVTSRQIEASRRAMTRYVKRGGQIWIRIFPDKPVTMRPAETRMGSGKGNPEFWVAVVKPGRILFEMGGDEITEAIAKEAMRLAQYKLPVKTKFISLDEDLNKGNYKPAKTPVTADDSESSS.

The segment at 140-161 is disordered; that stretch reads LNKGNYKPAKTPVTADDSESSS.

The protein belongs to the universal ribosomal protein uL16 family. In terms of assembly, part of the 50S ribosomal subunit.

Functionally, binds 23S rRNA and is also seen to make contacts with the A and possibly P site tRNAs. The sequence is that of Large ribosomal subunit protein uL16 from Prochlorococcus marinus (strain NATL2A).